Consider the following 768-residue polypeptide: Envelope glycoprotein gp160 (768 aa).

Positions 1-16 are cleaved as a signal peptide; that stretch reads MTKFLGIFIVLGIGIG. The Extracellular portion of the chain corresponds to 17-701; the sequence is IGISTKQQWI…SWFDFSKWLN (685 aa). An N-linked (GlcNAc...) asparagine; by host glycan is attached at asparagine 37. An intrachain disulfide couples cysteine 44 to cysteine 57. N-linked (GlcNAc...) asparagine; by host glycosylation is found at asparagine 70, asparagine 141, asparagine 151, asparagine 166, asparagine 181, asparagine 200, and asparagine 211. Cystine bridges form between cysteine 103–cysteine 219, cysteine 110–cysteine 210, cysteine 115–cysteine 167, cysteine 232–cysteine 262, and cysteine 242–cysteine 254. A V1 region spans residues 115 to 166; it reads CVELKGSATSTPATSTTAGTKLPCVRNKTDSNLQSCNDTIIEKEMNDEAASN. The segment at 167–210 is V2; it reads CTFAMAGYIRDQKKNYSVVWNDAEIFCKRSTSHNGTKECYMIHC. 11 N-linked (GlcNAc...) asparagine; by host glycosylation sites follow: asparagine 256, asparagine 267, asparagine 277, asparagine 283, asparagine 295, asparagine 307, asparagine 317, asparagine 374, asparagine 415, asparagine 490, and asparagine 493. The V3 stretch occupies residues 312–344; it reads CKRPGNKTVLPVTIMAGLVFHSQKYNTRLRQAW. A disulfide bridge links cysteine 312 with cysteine 345. Cystine bridges form between cysteine 397–cysteine 473 and cysteine 404–cysteine 446. A V4 region spans residues 404-446; it reads CKMDWFLNYLNNLTVDADHNHCKNNAGKGRSPGPCVQRTYVAC. The interval 489-496 is V5; the sequence is QNRTNVTL. Positions 539-559 are fusion peptide; sequence VPFVLGFLGFLGAAGTAMGAA. The segment at 602 to 618 is immunosuppression; the sequence is LNARVTALEKYLADQAR. N-linked (GlcNAc...) asparagine; by host glycosylation is found at asparagine 646 and asparagine 662. Positions 650 to 687 form a coiled coil; the sequence is LEWEKQIEGLEGNITKQLEQAREQEEKNLDAYQKLSDW. The segment at 683 to 704 is MPER; binding to GalCer; it reads KLSDWSSFWSWFDFSKWLNILK. The chain crosses the membrane as a helical span at residues 702–722; the sequence is ILKIGFLAVIGVIGLRLLYTL. At 723 to 768 the chain is on the cytoplasmic side; the sequence is YTCIARVRQGYSPLSPQIHIHPWKGQPDNAGEPEEGGRTGKSKSTH. The YXXL motif; contains endocytosis signal motif lies at 733–736; that stretch reads YSPL. A disordered region spans residues 744-768; that stretch reads PWKGQPDNAGEPEEGGRTGKSKSTH.

As to quaternary structure, the mature envelope protein (Env) consists of a homotrimer of non-covalently associated gp120-gp41 heterodimers. The resulting complex protrudes from the virus surface as a spike. Interacts with host CD4 and CCR5. Gp120 also interacts with the C-type lectins CD209/DC-SIGN and CLEC4M/DC-SIGNR (collectively referred to as DC-SIGN(R)). The mature envelope protein (Env) consists of a homotrimer of non-covalently associated gp120-gp41 heterodimers. The resulting complex protrudes from the virus surface as a spike. Specific enzymatic cleavages in vivo yield mature proteins. Envelope glycoproteins are synthesized as an inactive precursor that is heavily N-glycosylated and processed likely by host cell furin in the Golgi to yield the mature SU and TM proteins. The cleavage site between SU and TM requires the minimal sequence [KR]-X-[KR]-R.

Its subcellular location is the virion membrane. The protein resides in the host cell membrane. It localises to the host endosome membrane. In terms of biological role, the surface protein gp120 (SU) attaches the virus to the host lymphoid cell by binding to the primary receptor CD4. This interaction induces a structural rearrangement creating a high affinity binding site for a chemokine coreceptor like CCR5. This peculiar 2 stage receptor-interaction strategy allows gp120 to maintain the highly conserved coreceptor-binding site in a cryptic conformation, protected from neutralizing antibodies. These changes are transmitted to the transmembrane protein gp41 and are thought to activate its fusogenic potential by unmasking its fusion peptide. Its function is as follows. Surface protein gp120 (SU) may target the virus to gut-associated lymphoid tissue (GALT) by binding host ITGA4/ITGB7 (alpha-4/beta-7 integrins), a complex that mediates T-cell migration to the GALT. Interaction between gp120 and ITGA4/ITGB7 would allow the virus to enter GALT early in the infection, infecting and killing most of GALT's resting CD4+ T-cells. This T-cell depletion is believed to be the major insult to the host immune system leading to AIDS. The surface protein gp120 is a ligand for CD209/DC-SIGN and CLEC4M/DC-SIGNR, which are respectively found on dendritic cells (DCs), and on endothelial cells of liver sinusoids and lymph node sinuses. These interactions allow capture of viral particles at mucosal surfaces by these cells and subsequent transmission to permissive cells. DCs are professional antigen presenting cells, critical for host immunity by inducing specific immune responses against a broad variety of pathogens. They act as sentinels in various tissues where they take up antigen, process it, and present it to T-cells following migration to lymphoid organs. SIV subverts the migration properties of dendritic cells to gain access to CD4+ T-cells in lymph nodes. Virus transmission to permissive T-cells occurs either in trans (without DCs infection, through viral capture and transmission), or in cis (following DCs productive infection, through the usual CD4-gp120 interaction), thereby inducing a robust infection. In trans infection, bound virions remain infectious over days and it is proposed that they are not degraded, but protected in non-lysosomal acidic organelles within the DCs close to the cell membrane thus contributing to the viral infectious potential during DCs' migration from the periphery to the lymphoid tissues. On arrival at lymphoid tissues, intact virions recycle back to DCs' cell surface allowing virus transmission to CD4+ T-cells. Virion capture also seems to lead to MHC-II-restricted viral antigen presentation, and probably to the activation of SIV-specific CD4+ cells. Functionally, the transmembrane protein gp41 (TM) acts as a class I viral fusion protein. Under the current model, the protein has at least 3 conformational states: pre-fusion native state, pre-hairpin intermediate state, and post-fusion hairpin state. During fusion of viral and target intracellular membranes, the coiled coil regions (heptad repeats) assume a trimer-of-hairpins structure, positioning the fusion peptide in close proximity to the C-terminal region of the ectodomain. The formation of this structure appears to drive apposition and subsequent fusion of viral and target cell membranes. Complete fusion occurs in host cell endosomes. The virus undergoes clathrin-dependent internalization long before endosomal fusion, thus minimizing the surface exposure of conserved viral epitopes during fusion and reducing the efficacy of inhibitors targeting these epitopes. Membranes fusion leads to delivery of the nucleocapsid into the cytoplasm. In terms of biological role, the envelope glycoprotein gp160 precursor down-modulates cell surface CD4 antigen by interacting with it in the endoplasmic reticulum and blocking its transport to the cell surface. Its function is as follows. The gp120-gp41 heterodimer allows rapid transcytosis of the virus through CD4 negative cells such as simple epithelial monolayers of the intestinal, rectal and endocervical epithelial barriers. Both gp120 and gp41 specifically recognize glycosphingolipids galactosyl-ceramide (GalCer) or 3' sulfo-galactosyl-ceramide (GalS) present in the lipid rafts structures of epithelial cells. Binding to these alternative receptors allows the rapid transcytosis of the virus through the epithelial cells. This transcytotic vesicle-mediated transport of virions from the apical side to the basolateral side of the epithelial cells does not involve infection of the cells themselves. The chain is Envelope glycoprotein gp160 (env) from Simian immunodeficiency virus agm.vervet (isolate AGM155) (SIV-agm.ver).